A 416-amino-acid chain; its full sequence is Gamma-glutamyl phosphate reductase (416 aa).

The protein belongs to the gamma-glutamyl phosphate reductase family.

It is found in the cytoplasm. The catalysed reaction is L-glutamate 5-semialdehyde + phosphate + NADP(+) = L-glutamyl 5-phosphate + NADPH + H(+). It functions in the pathway amino-acid biosynthesis; L-proline biosynthesis; L-glutamate 5-semialdehyde from L-glutamate: step 2/2. In terms of biological role, catalyzes the NADPH-dependent reduction of L-glutamate 5-phosphate into L-glutamate 5-semialdehyde and phosphate. The product spontaneously undergoes cyclization to form 1-pyrroline-5-carboxylate. The chain is Gamma-glutamyl phosphate reductase from Streptococcus mutans serotype c (strain ATCC 700610 / UA159).